The sequence spans 270 residues: Putative pyruvate, phosphate dikinase regulatory protein (270 aa).

148 to 155 (GVSRTSKT) lines the ADP pocket.

This sequence belongs to the pyruvate, phosphate/water dikinase regulatory protein family. PDRP subfamily.

The catalysed reaction is N(tele)-phospho-L-histidyl/L-threonyl-[pyruvate, phosphate dikinase] + ADP = N(tele)-phospho-L-histidyl/O-phospho-L-threonyl-[pyruvate, phosphate dikinase] + AMP + H(+). The enzyme catalyses N(tele)-phospho-L-histidyl/O-phospho-L-threonyl-[pyruvate, phosphate dikinase] + phosphate + H(+) = N(tele)-phospho-L-histidyl/L-threonyl-[pyruvate, phosphate dikinase] + diphosphate. In terms of biological role, bifunctional serine/threonine kinase and phosphorylase involved in the regulation of the pyruvate, phosphate dikinase (PPDK) by catalyzing its phosphorylation/dephosphorylation. The protein is Putative pyruvate, phosphate dikinase regulatory protein of Bacillus cytotoxicus (strain DSM 22905 / CIP 110041 / 391-98 / NVH 391-98).